A 318-amino-acid polypeptide reads, in one-letter code: MITLFQCLYLILFSFICYQGAAAFSHSTAASWLAAALGAAAAGLYIWNTKRVWKHCSSGLCAWIAVIQVMSVGVVLIGTDIMPVLCVIAIFAGCEGLRIGQSALQARLSDQIDKLTQAEQHANQMLIDVRSRNHDTMKHITAIKSAQPKADTQAYIQNWADQYSQYDRFLKGENAYVAGVLYDFLEKARASNVSVSLHMHTPLSSLPFSPADQVSLVGNILENALDSAAEAREKAEIKLETSLRSGLYVLTCENSTPGMDPKVLDTIYQSFGRSTKNGAHEGMGTYIIQKLVKGAFGRLDFTYRHPIFRLEIKIPFQK.

The next 3 helical transmembrane spans lie at 4 to 24 (LFQCLYLILFSFICYQGAAAF), 27 to 47 (STAASWLAAALGAAAAGLYIW), and 72 to 82 (VGVVLIGTDIM). Residues 132 to 318 (RNHDTMKHIT…RLEIKIPFQK (187 aa)) form the Histidine kinase domain. The residue at position 134 (His134) is a Phosphohistidine; by autocatalysis.

The protein localises to the cell membrane. The enzyme catalyses ATP + protein L-histidine = ADP + protein N-phospho-L-histidine.. Its function is as follows. Member of the two-component regulatory system NatK/NatR that positively regulates the expression of the natAB operon. Potentially phosphorylates NatR. This Bacillus subtilis (strain 168) protein is Sensor histidine kinase NatK.